We begin with the raw amino-acid sequence, 101 residues long: MIPGELFPAEGEILLNAERAQITLVVSNAGDRPVQVGSHYHFAETNPALEFDREAARGMRLDIPAGTAVRFEPGQTREVRLVSYAGSREVYGFNGRIMGKL.

It belongs to the urease beta subunit family. In terms of assembly, heterotrimer of UreA (gamma), UreB (beta) and UreC (alpha) subunits. Three heterotrimers associate to form the active enzyme.

The protein resides in the cytoplasm. It carries out the reaction urea + 2 H2O + H(+) = hydrogencarbonate + 2 NH4(+). Its pathway is nitrogen metabolism; urea degradation; CO(2) and NH(3) from urea (urease route): step 1/1. The chain is Urease subunit beta from Cereibacter sphaeroides (strain ATCC 17029 / ATH 2.4.9) (Rhodobacter sphaeroides).